The following is a 313-amino-acid chain: Protoheme IX farnesyltransferase (313 aa).

A run of 9 helical transmembrane segments spans residues 35-55, 56-76, 98-118, 120-140, 153-173, 180-200, 226-246, 248-268, and 285-305; these read LVIF…HPVL, AFTS…LNMW, VSKP…VVTL, ILVN…YVVI, IVIG…AAAG, MLLF…LALF, ILLY…LGYF, AIYG…TLRV, and FKFS…EVIV.

It belongs to the UbiA prenyltransferase family. Protoheme IX farnesyltransferase subfamily.

It is found in the cell inner membrane. The enzyme catalyses heme b + (2E,6E)-farnesyl diphosphate + H2O = Fe(II)-heme o + diphosphate. It functions in the pathway porphyrin-containing compound metabolism; heme O biosynthesis; heme O from protoheme: step 1/1. Functionally, converts heme B (protoheme IX) to heme O by substitution of the vinyl group on carbon 2 of heme B porphyrin ring with a hydroxyethyl farnesyl side group. This chain is Protoheme IX farnesyltransferase, found in Rhodopseudomonas palustris (strain BisB18).